The primary structure comprises 356 residues: Protein RecA (356 aa).

67-74 (GPESSGKT) contacts ATP.

It belongs to the RecA family.

It localises to the cytoplasm. Can catalyze the hydrolysis of ATP in the presence of single-stranded DNA, the ATP-dependent uptake of single-stranded DNA by duplex DNA, and the ATP-dependent hybridization of homologous single-stranded DNAs. It interacts with LexA causing its activation and leading to its autocatalytic cleavage. This Yersinia pestis (strain Pestoides F) protein is Protein RecA.